We begin with the raw amino-acid sequence, 432 residues long: Putative transposase A625R (432 aa).

Zn(2+)-binding residues include Cys-375, Cys-378, Cys-393, and Cys-395.

This sequence in the N-terminal section; belongs to the transposase 2 family. It in the C-terminal section; belongs to the transposase 35 family.

The protein is Putative transposase A625R of Chlorella (PBCV-1).